The sequence spans 470 residues: DNA primase large subunit (470 aa).

Residues Cys-279, Cys-358, Cys-376, and Cys-414 each coordinate [4Fe-4S] cluster. A disordered region spans residues 449–470 (EEKKSAKQSNNKENENQSIDEK).

It belongs to the eukaryotic-type primase large subunit family. In terms of assembly, heterodimer of a small subunit and a large subunit. [4Fe-4S] cluster serves as cofactor.

Functionally, DNA primase is the polymerase that synthesizes small RNA primers for the Okazaki fragments made during discontinuous DNA replication. This Dictyostelium discoideum (Social amoeba) protein is DNA primase large subunit (prim2).